We begin with the raw amino-acid sequence, 272 residues long: Undecaprenyl-diphosphatase (272 aa).

8 helical membrane-spanning segments follow: residues 4–24, 43–63, 86–106, 109–129, 145–165, 186–206, 222–242, and 249–269; these read FEVI…FLPI, GGRV…CWLY, ISVL…VDFI, VLFS…IIFW, ITFK…IPGT, TEFS…FDLI, VGFV…VLFV, and VFAW…MFFN.

This sequence belongs to the UppP family.

It localises to the cell inner membrane. It carries out the reaction di-trans,octa-cis-undecaprenyl diphosphate + H2O = di-trans,octa-cis-undecaprenyl phosphate + phosphate + H(+). Its function is as follows. Catalyzes the dephosphorylation of undecaprenyl diphosphate (UPP). Confers resistance to bacitracin. This is Undecaprenyl-diphosphatase from Acinetobacter baumannii (strain SDF).